The following is a 258-amino-acid chain: Ferredoxin--NADP reductase (258 aa).

An FAD-binding FR-type domain is found at 2 to 102 (SNLNVERVLS…RKPTGTLVTS (101 aa)). Asp17 provides a ligand contact to NADP(+). FAD is bound by residues 51-54 (RAYS), 67-69 (FSI), 74-77 (GPLT), and Thr117. Residues 144–145 (VR), 181–182 (TR), and Arg190 each bind NADP(+). 254–258 (AFVEK) contacts FAD.

The protein belongs to the ferredoxin--NADP reductase type 1 family. Monomer. Requires FAD as cofactor.

It catalyses the reaction 2 reduced [2Fe-2S]-[ferredoxin] + NADP(+) + H(+) = 2 oxidized [2Fe-2S]-[ferredoxin] + NADPH. In terms of biological role, transports electrons between ferredoxin and NADPH. The polypeptide is Ferredoxin--NADP reductase (Azotobacter vinelandii).